Here is a 257-residue protein sequence, read N- to C-terminus: Pantothenate synthetase (257 aa).

29–36 is an ATP binding site; the sequence is MGNLHAGH. Histidine 36 serves as the catalytic Proton donor. (R)-pantoate is bound at residue glutamine 60. A beta-alanine-binding site is contributed by glutamine 60. 145-148 contributes to the ATP binding site; that stretch reads GEKD. Residue glutamine 151 coordinates (R)-pantoate. Residues valine 174 and 182-185 contribute to the ATP site; that span reads LSSR.

It belongs to the pantothenate synthetase family. Homodimer.

It is found in the cytoplasm. It catalyses the reaction (R)-pantoate + beta-alanine + ATP = (R)-pantothenate + AMP + diphosphate + H(+). The protein operates within cofactor biosynthesis; (R)-pantothenate biosynthesis; (R)-pantothenate from (R)-pantoate and beta-alanine: step 1/1. Functionally, catalyzes the condensation of pantoate with beta-alanine in an ATP-dependent reaction via a pantoyl-adenylate intermediate. The sequence is that of Pantothenate synthetase from Coxiella burnetii (strain CbuK_Q154) (Coxiella burnetii (strain Q154)).